Here is a 295-residue protein sequence, read N- to C-terminus: Diaminopimelate epimerase (295 aa).

Substrate contacts are provided by Asn13 and Asn69. Cys78 acts as the Proton donor in catalysis. Substrate contacts are provided by residues 79–80 (GN), Asn173, Asn212, and 230–231 (ER). Cys239 functions as the Proton acceptor in the catalytic mechanism. 240-241 (GT) serves as a coordination point for substrate.

The protein belongs to the diaminopimelate epimerase family. As to quaternary structure, homodimer.

It localises to the cytoplasm. The catalysed reaction is (2S,6S)-2,6-diaminopimelate = meso-2,6-diaminopimelate. Its pathway is amino-acid biosynthesis; L-lysine biosynthesis via DAP pathway; DL-2,6-diaminopimelate from LL-2,6-diaminopimelate: step 1/1. In terms of biological role, catalyzes the stereoinversion of LL-2,6-diaminopimelate (L,L-DAP) to meso-diaminopimelate (meso-DAP), a precursor of L-lysine. The chain is Diaminopimelate epimerase from Methanococcus aeolicus (strain ATCC BAA-1280 / DSM 17508 / OCM 812 / Nankai-3).